The primary structure comprises 162 residues: NADH-quinone oxidoreductase subunit I (162 aa).

2 consecutive 4Fe-4S ferredoxin-type domains span residues 53–83 (LRRY…IESE) and 93–122 (TRYD…EGPN). 8 residues coordinate [4Fe-4S] cluster: C63, C66, C69, C73, C102, C105, C108, and C112.

It belongs to the complex I 23 kDa subunit family. NDH-1 is composed of 14 different subunits. Subunits NuoA, H, J, K, L, M, N constitute the membrane sector of the complex. The cofactor is [4Fe-4S] cluster.

The protein localises to the cell inner membrane. The enzyme catalyses a quinone + NADH + 5 H(+)(in) = a quinol + NAD(+) + 4 H(+)(out). Its function is as follows. NDH-1 shuttles electrons from NADH, via FMN and iron-sulfur (Fe-S) centers, to quinones in the respiratory chain. The immediate electron acceptor for the enzyme in this species is believed to be ubiquinone. Couples the redox reaction to proton translocation (for every two electrons transferred, four hydrogen ions are translocated across the cytoplasmic membrane), and thus conserves the redox energy in a proton gradient. This Erythrobacter litoralis (strain HTCC2594) protein is NADH-quinone oxidoreductase subunit I.